Consider the following 96-residue polypeptide: MKIVKESLAGTFESSDLLVKVAPADGKLTVVINSEVMKQFGHQIKQVVNETLAALGVQEGTIIVDDKGALDCVIRARVQSAVLRATDGQQIEWETL.

At Ser-14 the chain carries O-(phosphoribosyl dephospho-coenzyme A)serine.

Belongs to the CitD family. As to quaternary structure, oligomer with a subunit composition of (alpha,beta,gamma)6.

The protein localises to the cytoplasm. Covalent carrier of the coenzyme of citrate lyase. This is Citrate lyase acyl carrier protein from Pectobacterium carotovorum subsp. carotovorum (strain PC1).